The following is a 742-amino-acid chain: Enhancer of polycomb-like protein 1 (742 aa).

Residues 1-27 (MPTPSAQLDQGIISSNGGTSGVSASST) show a composition bias toward polar residues. 3 disordered regions span residues 1-28 (MPTP…SSTR), 416-446 (RQQS…QCQQ), and 718-742 (KKLV…HQQA). A compositionally biased stretch (low complexity) spans 724 to 734 (QRQQQQQQQEQ).

The protein belongs to the enhancer of polycomb family. In terms of assembly, component of the NuA4 histone acetyltransferase complex.

The protein resides in the nucleus. Functionally, component of the NuA4 histone acetyltransferase complex which is involved in transcriptional activation of selected genes principally by acetylation of nucleosomal histone H4 and H2A. The NuA4 complex is also involved in DNA repair. Involved in gene silencing by neighboring heterochromatin, blockage of the silencing spreading along the chromosome, and required for cell cycle progression through G2/M. This chain is Enhancer of polycomb-like protein 1 (EPL1), found in Eremothecium gossypii (strain ATCC 10895 / CBS 109.51 / FGSC 9923 / NRRL Y-1056) (Yeast).